Consider the following 206-residue polypeptide: Probable GTP-binding protein EngB (206 aa).

The 188-residue stretch at 8-195 folds into the EngB-type G domain; that stretch reads RSDEVVLVGR…EDAVNSHFDA (188 aa). Residues 16–23, 41–45, 60–63, 140–143, and 175–177 each bind GTP; these read GRSNVGKS, GVTRQ, DLPG, NKMD, and ITA. Serine 23 and threonine 43 together coordinate Mg(2+).

Belongs to the TRAFAC class TrmE-Era-EngA-EngB-Septin-like GTPase superfamily. EngB GTPase family. It depends on Mg(2+) as a cofactor.

Necessary for normal cell division and for the maintenance of normal septation. The protein is Probable GTP-binding protein EngB of Halobacterium salinarum (strain ATCC 29341 / DSM 671 / R1).